We begin with the raw amino-acid sequence, 106 residues long: U1-lycotoxin-Ls1z (106 aa).

The signal sequence occupies residues 1 to 19 (MKVLVVVALLVTLISYSSS). Residues 20–40 (EGIDDLEADELLSLMANEQTR) constitute a propeptide that is removed on maturation. Disulfide bonds link Cys43–Cys58, Cys50–Cys67, Cys57–Cys85, and Cys69–Cys83.

This sequence belongs to the neurotoxin 19 (CSTX) family. 03 subfamily. Expressed by the venom gland.

It is found in the secreted. In Lycosa singoriensis (Wolf spider), this protein is U1-lycotoxin-Ls1z.